The chain runs to 147 residues: MKVEIFCDGACSGNPGVGGWGSILRYGDTVKELSGADGDTTNNRMEMTAAIEALASLKRPCEVVLTTDSQYLVKGMTEWMSGWIRKGWVNSKKEPVLNRELWERLLALSKIHKIRWAWVRGHNGHPENERCDELARAAIEVFKGRKP.

Mg(2+) is bound by residues D8, E46, D68, and D132.

Belongs to the RNase H family. Monomer. It depends on Mg(2+) as a cofactor.

The protein resides in the cytoplasm. It catalyses the reaction Endonucleolytic cleavage to 5'-phosphomonoester.. Endonuclease that specifically degrades the RNA of RNA-DNA hybrids. The chain is Ribonuclease H from Geotalea uraniireducens (strain Rf4) (Geobacter uraniireducens).